The chain runs to 162 residues: MTMPGARGWPKWFALAALVIVLDQISKLYFNSRFQYGEIRPVVEGFFNFTLVYNPGAAFSFLHDAGGWQKYLFTILAFAVSGWLGWNIVKRRFSGLMNLAAAFIMGGALGNVIDRLAYGHVIDFIMVHYYNEWYYPAFNLADSFICVGAALMVADSMKKPSR.

The next 4 helical transmembrane spans lie at 12–32 (WFALAALVIVLDQISKLYFNS), 42–62 (VVEGFFNFTLVYNPGAAFSFL), 66–86 (GGWQKYLFTILAFAVSGWLGW), and 93–113 (FSGLMNLAAAFIMGGALGNVI). Catalysis depends on residues D123 and D142. The helical transmembrane segment at 133 to 153 (WYYPAFNLADSFICVGAALMV) threads the bilayer.

It belongs to the peptidase A8 family.

It localises to the cell inner membrane. The catalysed reaction is Release of signal peptides from bacterial membrane prolipoproteins. Hydrolyzes -Xaa-Yaa-Zaa-|-(S,diacylglyceryl)Cys-, in which Xaa is hydrophobic (preferably Leu), and Yaa (Ala or Ser) and Zaa (Gly or Ala) have small, neutral side chains.. Its pathway is protein modification; lipoprotein biosynthesis (signal peptide cleavage). Its function is as follows. This protein specifically catalyzes the removal of signal peptides from prolipoproteins. The sequence is that of Lipoprotein signal peptidase from Chromobacterium violaceum (strain ATCC 12472 / DSM 30191 / JCM 1249 / CCUG 213 / NBRC 12614 / NCIMB 9131 / NCTC 9757 / MK).